The primary structure comprises 134 residues: Gastrin-releasing peptide (134 aa).

The signal sequence occupies residues 1–23 (MRSREVSLVLLALVLCPAPRGSA). M50 carries the post-translational modification Methionine amide. The propeptide occupies 54-134 (SVAESPQLRE…QREGGNPQLY (81 aa)). A disordered region spans residues 98–134 (PPRWEPLSIHQPAWDSKDVSNFKDSGSQREGGNPQLY). The span at 119–134 (FKDSGSQREGGNPQLY) shows a compositional bias: polar residues.

The protein belongs to the bombesin/neuromedin-B/ranatensin family.

It is found in the secreted. The protein localises to the cytoplasmic vesicle. It localises to the secretory vesicle lumen. The protein resides in the cell projection. Its subcellular location is the neuron projection. Stimulates the release of gastrin and other gastrointestinal hormones. Contributes to the perception of prurient stimuli and to the transmission of itch signals in the spinal cord that promote scratching behavior. Contributes primarily to nonhistaminergic itch sensation. In one study, shown to act in the amygdala as part of an inhibitory network which inhibits memory specifically related to learned fear. In another study, shown to act on vasoactive intestinal peptide (VIP)-expressing cells in the auditory cortex, most likely via extrasynaptic diffusion from local and long-range sources, to mediate disinhibition of glutamatergic cells via VIP cell-specific GRPR signaling which leads to enhanced auditory fear memories. Contributes to the regulation of food intake. Inhibits voltage-gated sodium channels but enhances voltage-gated potassium channels in hippocampal neurons. Induces sighing by acting directly on the pre-Botzinger complex, a cluster of several thousand neurons in the ventrolateral medulla responsible for inspiration during respiratory activity. Its function is as follows. Induces an itch response through activation of receptors present on mast cells, triggering mast cell degranulation. In Ovis aries (Sheep), this protein is Gastrin-releasing peptide (GRP).